Consider the following 248-residue polypeptide: PF03932 family protein CutC (248 aa).

This sequence belongs to the CutC family.

The protein localises to the cytoplasm. The chain is PF03932 family protein CutC from Photorhabdus laumondii subsp. laumondii (strain DSM 15139 / CIP 105565 / TT01) (Photorhabdus luminescens subsp. laumondii).